The primary structure comprises 260 residues: Putative nudix hydrolase 6 (260 aa).

Residues 113 to 257 form the Nudix hydrolase domain; it reads PNHAADPIVS…SHFIDLLKES (145 aa). Residues 148 to 170 carry the Nudix box motif; that stretch reads GMVDAGEHVSQTLRREFAEEAMH. 2 residues coordinate Mg(2+): E163 and E167.

The protein belongs to the Nudix hydrolase family. Mg(2+) is required as a cofactor. Mn(2+) serves as cofactor.

Its function is as follows. Probably mediates the hydrolysis of some nucleoside diphosphate derivatives. This chain is Putative nudix hydrolase 6 (ndx-6), found in Caenorhabditis elegans.